Consider the following 958-residue polypeptide: MAKVRVHELAKELGITSKDAVTKLQELGEFVRSASSTIEAPVVKKLRDAYPGAGAAKAAAPAAAPKAPAASRPAAPAPGPAAPKAPAPAPAAPAPAAPAAAAPAAAAPAAPAPAAPAAPAASTPVSAKPGARPAPKAETPAPARQGGQAPRPGGPRPGNNPFATSQGMPRGRGGDGDRPPRPGNNPFAPSQGMPRGERRNDGERPGGPRPAAGAGGPRPAAGTGGPRPGAPRPGAPRPGAPRPAGGPGAGNRPTPGMMPNRTERPAPGGAGRPGGAGRPGGGPGRPGGAPGAGTGGGAPAGGGFGKGGRGRGGTQGAFGKGGAGRGKQRKSKRAKRQELEQMSAPSLGGVSVPRGDGETIIRLRRGSSITDFAEKIDANPASLVTVLFHLGEMATATQSLDEDTFGLLGAELGYKLQVVSPEDEERELLDQFDINIQDELDAEGDDVLEARAPVVTVMGHVDHGKTRLLDAIRNSNVVAGEHGGITQHIGAYQISHVHEGKARDITFIDTPGHEAFTAMRARGAKVTDIAILVVAADDGVMPQTVEALNHAQAANVPIVVAVNKIDKEGANPDKVKGQLTEYGLVPEEYGGDTMFVEVSARQNLNIDELIDAVLLTADAALDLRANPDKDARGIAIEANLDKGRGAVATVLVQSGTLAVGDTIVAGTAHGRVRAMFDENGEALDVALPSRPVQVLGLSNVPRAGDTFLVTPDERTARQIAEKREAADRNAALAKRRKRISLEDFDQAVAEGKIDTLNLILKGDVSGAVEALEDALLKIDVGDDDVQLRVIHRGVGAITQNDVNLATVDNAIIIGFNVKPAERVAELADREGVDMRFYSVIYAAIDDIEMALKGMLKPEYEEVQLGTAEVREVFRSSKFGNIAGSIVRTGIIRRNSKARVSRDGKVIGDNLTVETLKRFKDDATEVRTDFECGIGLGSFNDINEGDIIETFEMREKPRS.

2 disordered regions span residues 67–95 and 111–355; these read APAA…APAP and PAPA…VPRG. Pro residues predominate over residues 75-95; it reads APAPGPAAPKAPAPAPAAPAP. Low complexity predominate over residues 140–161; sequence PAPARQGGQAPRPGGPRPGNNP. Residues 195 to 206 are compositionally biased toward basic and acidic residues; it reads RGERRNDGERPG. The span at 209-221 shows a compositional bias: low complexity; sequence RPAAGAGGPRPAA. The segment covering 228 to 241 has biased composition (pro residues); the sequence is PGAPRPGAPRPGAP. The segment covering 268 to 325 has biased composition (gly residues); the sequence is GGAGRPGGAGRPGGGPGRPGGAPGAGTGGGAPAGGGFGKGGRGRGGTQGAFGKGGAGR. Positions 326 to 335 are enriched in basic residues; that stretch reads GKQRKSKRAK. Residues 450–621 enclose the tr-type G domain; that stretch reads ARAPVVTVMG…AVLLTADAAL (172 aa). The G1 stretch occupies residues 459–466; sequence GHVDHGKT. 459-466 contributes to the GTP binding site; sequence GHVDHGKT. The tract at residues 484 to 488 is G2; that stretch reads GITQH. A G3 region spans residues 509–512; the sequence is DTPG. GTP contacts are provided by residues 509 to 513 and 563 to 566; these read DTPGH and NKID. The tract at residues 563-566 is G4; sequence NKID. Residues 599 to 601 form a G5 region; the sequence is SAR.

Belongs to the TRAFAC class translation factor GTPase superfamily. Classic translation factor GTPase family. IF-2 subfamily.

Its subcellular location is the cytoplasm. One of the essential components for the initiation of protein synthesis. Protects formylmethionyl-tRNA from spontaneous hydrolysis and promotes its binding to the 30S ribosomal subunits. Also involved in the hydrolysis of GTP during the formation of the 70S ribosomal complex. In Paenarthrobacter aurescens (strain TC1), this protein is Translation initiation factor IF-2.